The sequence spans 65 residues: Large ribosomal subunit protein bL35 (65 aa).

Belongs to the bacterial ribosomal protein bL35 family.

The protein is Large ribosomal subunit protein bL35 of Aromatoleum aromaticum (strain DSM 19018 / LMG 30748 / EbN1) (Azoarcus sp. (strain EbN1)).